The sequence spans 152 residues: MTSPDHWLKLERQVHFGDTDAAGVMHFHQLLRWCHEAWEESLERYGIAAGSVFPGCRGQQRWPAVALPVVHCQADFKRPVHGSDRLQVHLKPQRLDPGCFEVRSEFHLDATVMACGLVRHLAIHSDSRERCALPETVDLWLEASALGQITSL.

Asp20 is an active-site residue.

It belongs to the 4-hydroxybenzoyl-CoA thioesterase family. DHNA-CoA hydrolase subfamily.

It carries out the reaction 1,4-dihydroxy-2-naphthoyl-CoA + H2O = 1,4-dihydroxy-2-naphthoate + CoA + H(+). The protein operates within cofactor biosynthesis; phylloquinone biosynthesis. It functions in the pathway quinol/quinone metabolism; 1,4-dihydroxy-2-naphthoate biosynthesis; 1,4-dihydroxy-2-naphthoate from chorismate: step 7/7. In terms of biological role, catalyzes the hydrolysis of 1,4-dihydroxy-2-naphthoyl-CoA (DHNA-CoA) to 1,4-dihydroxy-2-naphthoate (DHNA), a reaction involved in phylloquinone (vitamin K1) biosynthesis. This is 1,4-dihydroxy-2-naphthoyl-CoA hydrolase from Parasynechococcus marenigrum (strain WH8102).